A 235-amino-acid chain; its full sequence is Ribonuclease 3 (235 aa).

The RNase III domain occupies 6–131; it reads IDQLEKLTGH…LIAVIYLDGG (126 aa). Residue Glu44 coordinates Mg(2+). Residue Asp48 is part of the active site. Mg(2+) is bound by residues Asp117 and Glu120. The active site involves Glu120. In terms of domain architecture, DRBM spans 156–225; sequence DAKTQLQEWA…AEKILRREGI (70 aa).

Belongs to the ribonuclease III family. In terms of assembly, homodimer. It depends on Mg(2+) as a cofactor.

Its subcellular location is the cytoplasm. The enzyme catalyses Endonucleolytic cleavage to 5'-phosphomonoester.. Its function is as follows. Digests double-stranded RNA. Involved in the processing of primary rRNA transcript to yield the immediate precursors to the large and small rRNAs (23S and 16S). Processes some mRNAs, and tRNAs when they are encoded in the rRNA operon. Processes pre-crRNA and tracrRNA of type II CRISPR loci if present in the organism. This is Ribonuclease 3 from Bartonella henselae (strain ATCC 49882 / DSM 28221 / CCUG 30454 / Houston 1) (Rochalimaea henselae).